The primary structure comprises 173 residues: Large ribosomal subunit protein bL9 (173 aa).

Belongs to the bacterial ribosomal protein bL9 family.

Its function is as follows. Binds to the 23S rRNA. In Rickettsia bellii (strain RML369-C), this protein is Large ribosomal subunit protein bL9.